Here is a 109-residue protein sequence, read N- to C-terminus: Nucleoid-associated protein VIBHAR_03086 (109 aa).

Disordered regions lie at residues 1–21 (MFGK…QDRM) and 88–109 (QKEK…KMPF).

It belongs to the YbaB/EbfC family. Homodimer.

It is found in the cytoplasm. It localises to the nucleoid. Its function is as follows. Binds to DNA and alters its conformation. May be involved in regulation of gene expression, nucleoid organization and DNA protection. This chain is Nucleoid-associated protein VIBHAR_03086, found in Vibrio campbellii (strain ATCC BAA-1116).